A 317-amino-acid polypeptide reads, in one-letter code: MPVQGSPRSLLGAVNSTPTATPHLRPAANQTGPQCLEVSIPDGLFLCLGLVSLVENTLVVAAIAKNRNLHSPMYCFVCCLALSDLLVSVSSVLETAVLLLLGAGALAAQATVVQLLGNVIDVLLCSSMVSSLFFLGAIAMDRYISIFYALRYHSIVTLARARRAIAAIWAASMLSSTLFIAYCDHTAALLCLVVFFLAMLVLMAVLYVHMLTQACQHAQGIARLHKRQRPVQQGWGLKGAATLAILLGVFFLCWGPFFLHLTLIAVCPQHPTCSCIFKNFRLFLALIVCNAIVDPLIYAFRSQELCKTLKELLLFSW.

Positions 1 to 26 (MPVQGSPRSLLGAVNSTPTATPHLRP) are disordered. Residues 1–37 (MPVQGSPRSLLGAVNSTPTATPHLRPAANQTGPQCLE) lie on the Extracellular side of the membrane. Asn-29 is a glycosylation site (N-linked (GlcNAc...) asparagine). Residues 38 to 63 (VSIPDGLFLCLGLVSLVENTLVVAAI) traverse the membrane as a helical segment. Residues 64-72 (AKNRNLHSP) lie on the Cytoplasmic side of the membrane. A helical membrane pass occupies residues 73–93 (MYCFVCCLALSDLLVSVSSVL). Residues 94-118 (ETAVLLLLGAGALAAQATVVQLLGN) lie on the Extracellular side of the membrane. A helical membrane pass occupies residues 119–140 (VIDVLLCSSMVSSLFFLGAIAM). Residues 141-163 (DRYISIFYALRYHSIVTLARARR) lie on the Cytoplasmic side of the membrane. A helical membrane pass occupies residues 164-183 (AIAAIWAASMLSSTLFIAYC). The Extracellular segment spans residues 184-191 (DHTAALLC). Residues 192 to 211 (LVVFFLAMLVLMAVLYVHML) traverse the membrane as a helical segment. Residues 212–240 (TQACQHAQGIARLHKRQRPVQQGWGLKGA) are Cytoplasmic-facing. A helical transmembrane segment spans residues 241–266 (ATLAILLGVFFLCWGPFFLHLTLIAV). Residues 267–279 (CPQHPTCSCIFKN) lie on the Extracellular side of the membrane. A helical transmembrane segment spans residues 280-300 (FRLFLALIVCNAIVDPLIYAF). The Cytoplasmic portion of the chain corresponds to 301–317 (RSQELCKTLKELLLFSW).

This sequence belongs to the G-protein coupled receptor 1 family. Interacts with MGRN1, but does not undergo MGRN1-mediated ubiquitination; this interaction competes with GNAS-binding and thus inhibits agonist-induced cAMP production. Interacts with OPN3; the interaction results in a decrease in MC1R-mediated cAMP signaling and ultimately a decrease in melanin production in melanocytes.

The protein resides in the cell membrane. Receptor for MSH (alpha, beta and gamma) and ACTH. The activity of this receptor is mediated by G proteins which activate adenylate cyclase. Mediates melanogenesis, the production of eumelanin (black/brown) and phaeomelanin (red/yellow), via regulation of cAMP signaling in melanocytes. This is Melanocyte-stimulating hormone receptor (MC1R) from Hapalemur griseus (Gray gentle lemur).